The chain runs to 722 residues: Polyribonucleotide nucleotidyltransferase (722 aa).

Positions 487 and 493 each coordinate Mg(2+). Residues 554–613 (PRMVSFKIHPDKIREVIGKGGATIQALTKETGCSIDIKDDGTVTIASTSAEGMAEAKARI) form the KH domain. Positions 623-691 (GKIYEGPVVK…ERGRLRLSLK (69 aa)) constitute an S1 motif domain.

It belongs to the polyribonucleotide nucleotidyltransferase family. Mg(2+) serves as cofactor.

Its subcellular location is the cytoplasm. The catalysed reaction is RNA(n+1) + phosphate = RNA(n) + a ribonucleoside 5'-diphosphate. Involved in mRNA degradation. Catalyzes the phosphorolysis of single-stranded polyribonucleotides processively in the 3'- to 5'-direction. The polypeptide is Polyribonucleotide nucleotidyltransferase (Polynucleobacter asymbioticus (strain DSM 18221 / CIP 109841 / QLW-P1DMWA-1) (Polynucleobacter necessarius subsp. asymbioticus)).